The chain runs to 434 residues: N-acylneuraminate cytidylyltransferase (434 aa).

M1 bears the N-acetylmethionine mark. The segment at 1-42 (MDSVEKGAATSVSNPRGRPSRGRPPKLQRNSRGGQGRGVEKP) is disordered. A BC1 motif motif is present at residues 15–31 (PRGRPSRGRPPKLQRNS). An omega-N-methylarginine mark is found at R37 and R52. The substrate site is built by R52, N62, R111, S120, S122, and Q143. Positions 200 to 206 (KRPRRQD) match the BC2 motif motif. The active site involves R201. Positions 269-276 (KEKLKEIK) match the BC3 motif motif.

The protein belongs to the CMP-NeuNAc synthase family. As to quaternary structure, homotetramer; the active enzyme is formed by a dimer of dimers.

Its subcellular location is the nucleus. It catalyses the reaction an N-acylneuraminate + CTP = a CMP-N-acyl-beta-neuraminate + diphosphate. Its pathway is amino-sugar metabolism; N-acetylneuraminate metabolism. Functionally, catalyzes the activation of N-acetylneuraminic acid (NeuNAc) to cytidine 5'-monophosphate N-acetylneuraminic acid (CMP-NeuNAc), a substrate required for the addition of sialic acid. Has some activity toward NeuNAc, N-glycolylneuraminic acid (Neu5Gc) or 2-keto-3-deoxy-D-glycero-D-galacto-nononic acid (KDN). The sequence is that of N-acylneuraminate cytidylyltransferase (CMAS) from Bos taurus (Bovine).